Here is an 841-residue protein sequence, read N- to C-terminus: uncharacterized protein (841 aa).

An N-terminal signal peptide occupies residues 1–31; it reads MKIERYFKAIARAFIITFLFSLILQDNGVLA.

It is found in the secreted. This is an uncharacterized protein from Schizosaccharomyces pombe (strain 972 / ATCC 24843) (Fission yeast).